Here is a 420-residue protein sequence, read N- to C-terminus: Pre-mRNA-splicing factor RBM22 (420 aa).

A C3H1-type zinc finger spans residues 159-186 (RNRPHICSFWVKGECKRGEECPYRHEKP). One can recognise an RRM domain in the interval 232–305 (TTLYVGGLGD…RRLNVKWGRS (74 aa)). Disordered stretches follow at residues 303–343 (GRSQ…AAEE) and 372–420 (APPP…HSSP). The span at 309-318 (RGKEKDKEGT) shows a compositional bias: basic and acidic residues.

The protein belongs to the SLT11 family. Component of the pre-catalytic and catalytic spliceosome complexes. Component of the postcatalytic spliceosome P complex.

It is found in the nucleus. Its subcellular location is the cytoplasm. Required for pre-mRNA splicing as component of the activated spliceosome. Involved in the first step of pre-mRNA splicing. Binds directly to the internal stem-loop (ISL) domain of the U6 snRNA and to the pre-mRNA intron near the 5' splice site during the activation and catalytic phases of the spliceosome cycle. In Gallus gallus (Chicken), this protein is Pre-mRNA-splicing factor RBM22 (RBM22).